The following is a 139-amino-acid chain: Putative nickel-responsive regulator (139 aa).

Positions 79, 90, 92, and 98 each coordinate Ni(2+).

This sequence belongs to the transcriptional regulatory CopG/NikR family. Ni(2+) serves as cofactor.

Its function is as follows. Transcriptional regulator. This is Putative nickel-responsive regulator from Nitratidesulfovibrio vulgaris (strain ATCC 29579 / DSM 644 / CCUG 34227 / NCIMB 8303 / VKM B-1760 / Hildenborough) (Desulfovibrio vulgaris).